A 442-amino-acid polypeptide reads, in one-letter code: Mimosinase, chloroplastic (442 aa).

The transit peptide at 1 to 35 (MALPSAFLNPFVPSPVTANPRTKFARVGKGFNVSC) directs the protein to the chloroplast. 6 residues coordinate pyridoxal 5'-phosphate: Tyr103, Arg105, Gly133, Met134, Ser252, and Thr254. Lys255 carries the post-translational modification N6-(pyridoxal phosphate)lysine.

The protein belongs to the trans-sulfuration enzymes family. As to quaternary structure, forms homodimers. May form homotetramers from two homodimers. Pyridoxal 5'-phosphate is required as a cofactor.

Its subcellular location is the plastid. It is found in the chloroplast. It carries out the reaction L-mimosine + H2O = 3-hydroxy-4H-pyrid-4-one + pyruvate + NH4(+). The enzyme catalyses L,L-cystathionine + H2O = L-homocysteine + pyruvate + NH4(+). It catalyses the reaction an S-substituted L-cysteine + H2O = a thiol + pyruvate + NH4(+). Its function is as follows. Catalyzes the degradation of mimosine, which is a toxic secondary metabolite found in all Mimosa and Leucaena species. Catalyzes the degradation of cystathionine, but seems to have lower preference toward cystathionine over mimosine. The protein is Mimosinase, chloroplastic of Mimosa pudica (Sensitive plant).